We begin with the raw amino-acid sequence, 194 residues long: MVSRWEKLKNNPQTKSIGISIFLMMITRVIDFSRPSLLWPLRILYATVNIVQIGIFLYTKIIIEKKNDLTVLKYVEPATPMSGREHSKFVATTVRDYDLSKLLTSFKQMLVTIATTLFMHLYMGYAPPLLLQSVSAARGLFDNSEVQIHVQNKPAIDELRRPFKSSGGLLGSFGQVLTDKKSVDEAELTKLKPT.

Transmembrane regions (helical) follow at residues 43-63 (ILYA…KIII) and 110-130 (LVTI…PPLL).

It belongs to the PHO88 family.

It is found in the endoplasmic reticulum membrane. May function in a SRP (signal recognition particle) and GET (guided entry of tail-anchored proteins) independent pathway for targeting a broad range of substrate proteins to the endoplasmic reticulum. Involved in inorganic phosphate uptake. Also involved in telomere length regulation and maintenance. The chain is SRP-independent targeting protein 3 homolog from Schizosaccharomyces pombe (strain 972 / ATCC 24843) (Fission yeast).